Consider the following 391-residue polypeptide: Acetate kinase (391 aa).

Asn7 is a Mg(2+) binding site. Residue Lys14 participates in ATP binding. Residue Arg88 participates in substrate binding. Asp145 functions as the Proton donor/acceptor in the catalytic mechanism. ATP contacts are provided by residues 203-207 (HAGNG), 278-280 (DAR), and 326-330 (GMGEN). Glu378 serves as a coordination point for Mg(2+).

Belongs to the acetokinase family. Homodimer. Mg(2+) is required as a cofactor. The cofactor is Mn(2+).

The protein localises to the cytoplasm. It catalyses the reaction acetate + ATP = acetyl phosphate + ADP. It functions in the pathway metabolic intermediate biosynthesis; acetyl-CoA biosynthesis; acetyl-CoA from acetate: step 1/2. In terms of biological role, catalyzes the formation of acetyl phosphate from acetate and ATP. Can also catalyze the reverse reaction. The protein is Acetate kinase of Phytoplasma mali (strain AT).